Reading from the N-terminus, the 126-residue chain is Aspartate 1-decarboxylase (126 aa).

The active-site Schiff-base intermediate with substrate; via pyruvic acid is serine 25. Serine 25 is subject to Pyruvic acid (Ser). Threonine 57 is a substrate binding site. Tyrosine 58 (proton donor) is an active-site residue. Glycine 73–alanine 75 lines the substrate pocket.

The protein belongs to the PanD family. As to quaternary structure, heterooctamer of four alpha and four beta subunits. It depends on pyruvate as a cofactor. In terms of processing, is synthesized initially as an inactive proenzyme, which is activated by self-cleavage at a specific serine bond to produce a beta-subunit with a hydroxyl group at its C-terminus and an alpha-subunit with a pyruvoyl group at its N-terminus.

The protein localises to the cytoplasm. The enzyme catalyses L-aspartate + H(+) = beta-alanine + CO2. Its pathway is cofactor biosynthesis; (R)-pantothenate biosynthesis; beta-alanine from L-aspartate: step 1/1. Functionally, catalyzes the pyruvoyl-dependent decarboxylation of aspartate to produce beta-alanine. This Stutzerimonas stutzeri (strain A1501) (Pseudomonas stutzeri) protein is Aspartate 1-decarboxylase.